Consider the following 263-residue polypeptide: Hydroxyethylthiazole kinase (263 aa).

M41 is a binding site for substrate. Residues R117 and S163 each coordinate ATP. Position 190 (G190) interacts with substrate.

The protein belongs to the Thz kinase family. The cofactor is Mg(2+).

The enzyme catalyses 5-(2-hydroxyethyl)-4-methylthiazole + ATP = 4-methyl-5-(2-phosphooxyethyl)-thiazole + ADP + H(+). Its pathway is cofactor biosynthesis; thiamine diphosphate biosynthesis; 4-methyl-5-(2-phosphoethyl)-thiazole from 5-(2-hydroxyethyl)-4-methylthiazole: step 1/1. Catalyzes the phosphorylation of the hydroxyl group of 4-methyl-5-beta-hydroxyethylthiazole (THZ). This is Hydroxyethylthiazole kinase from Lactiplantibacillus plantarum (strain ATCC BAA-793 / NCIMB 8826 / WCFS1) (Lactobacillus plantarum).